The chain runs to 39 residues: MDWRVLIVLTPLLIAGGWAVFNIGAAALRQAQQFLSKQS.

Residues 5–23 traverse the membrane as a helical segment; that stretch reads VLIVLTPLLIAGGWAVFNI.

Belongs to the PsbY family. In terms of assembly, PSII is composed of 1 copy each of membrane proteins PsbA, PsbB, PsbC, PsbD, PsbE, PsbF, PsbH, PsbI, PsbJ, PsbK, PsbL, PsbM, PsbT, PsbX, PsbY, PsbZ, Psb30/Ycf12, peripheral proteins PsbO, CyanoQ (PsbQ), PsbU, PsbV and a large number of cofactors. It forms dimeric complexes.

The protein resides in the cellular thylakoid membrane. Loosely associated component of the core of photosystem II (PSII), it is not always seen in crystals. PSII is a light-driven water plastoquinone oxidoreductase, using light energy to abstract electrons from H(2)O, generating a proton gradient subsequently used for ATP formation. This is Photosystem II reaction center protein Y from Microcystis aeruginosa (strain NIES-843 / IAM M-2473).